We begin with the raw amino-acid sequence, 163 residues long: MAKKIITVNVNGKAQEKAVEPRTLLIHFLREELNLTGAHIGCETSHCGACTVDIDGRSVKSCTHLAVQCDGSEVLTVEGLANKGVLHAVREGFYKEHGLQCGFCTPGMLMRAYRFLQENPNPTEAEIRMGMTGNLCRCTGYQNIVKAVQYAARKLQEPSTAAA.

The 77-residue stretch at 4–80 folds into the 2Fe-2S ferredoxin-type domain; that stretch reads KIITVNVNGK…GSEVLTVEGL (77 aa). [2Fe-2S] cluster contacts are provided by Cys-42, Cys-47, Cys-50, Cys-62, Cys-101, Cys-104, Cys-136, and Cys-138.

Dimer of heterotrimers. Each heterotrimer consists of a large, a medium and a small subunit. [2Fe-2S] cluster serves as cofactor.

It carries out the reaction CO + a quinone + H2O = a quinol + CO2. Catalyzes the oxidation of carbon monoxide to carbon dioxide. The sequence is that of Carbon monoxide dehydrogenase small chain (cutS) from Hydrogenophaga pseudoflava (Pseudomonas carboxydoflava).